Consider the following 235-residue polypeptide: Large ribosomal subunit protein uL1 (235 aa).

It belongs to the universal ribosomal protein uL1 family. In terms of assembly, part of the 50S ribosomal subunit.

In terms of biological role, binds directly to 23S rRNA. The L1 stalk is quite mobile in the ribosome, and is involved in E site tRNA release. Its function is as follows. Protein L1 is also a translational repressor protein, it controls the translation of the L11 operon by binding to its mRNA. This Prochlorococcus marinus (strain MIT 9215) protein is Large ribosomal subunit protein uL1.